The chain runs to 464 residues: IAA-amino acid hydrolase ILR1-like 6 (464 aa).

Residues 1-24 (MDNLRKLNLLSVSLTIIFVSLTIA) form the signal peptide. Positions 175, 177, 211, 235, and 433 each coordinate Mn(2+).

Belongs to the peptidase M20 family.

The catalysed reaction is a jasmonyl-L-amino acid + H2O = a jasmonate + an L-alpha-amino acid. In terms of biological role, hydrolyzes certain amino acid conjugates of the plant growth regulator indole-3-acetic acid (IAA). Also hydrolyzes amino acid conjugates of jasmonic acid and 12-hydroxy jasmonic acid. This is IAA-amino acid hydrolase ILR1-like 6 from Arabidopsis thaliana (Mouse-ear cress).